We begin with the raw amino-acid sequence, 368 residues long: Spermidine/putrescine import ATP-binding protein PotA (368 aa).

Residues 8–238 (IELKNVSKIF…PVNLFVARFV (231 aa)) enclose the ABC transporter domain. 40–47 (GPSGCGKT) serves as a coordination point for ATP.

The protein belongs to the ABC transporter superfamily. Spermidine/putrescine importer (TC 3.A.1.11.1) family. In terms of assembly, the complex is composed of two ATP-binding proteins (PotA), two transmembrane proteins (PotB and PotC) and a solute-binding protein (PotD).

The protein localises to the cell membrane. The catalysed reaction is ATP + H2O + polyamine-[polyamine-binding protein]Side 1 = ADP + phosphate + polyamineSide 2 + [polyamine-binding protein]Side 1.. Functionally, part of the ABC transporter complex PotABCD involved in spermidine/putrescine import. Responsible for energy coupling to the transport system. In Lawsonia intracellularis (strain PHE/MN1-00), this protein is Spermidine/putrescine import ATP-binding protein PotA.